Reading from the N-terminus, the 665-residue chain is DNA ligase (665 aa).

NAD(+) is bound by residues 32-36 (DSEYD), 81-82 (SL), and Glu-110. The active-site N6-AMP-lysine intermediate is Lys-112. NAD(+)-binding residues include Arg-133, Glu-167, Lys-283, and Lys-307. Positions 401, 404, 419, and 424 each coordinate Zn(2+). The region spanning 586-665 (EGHPDFSGKT…AAFIEKQNGI (80 aa)) is the BRCT domain.

It belongs to the NAD-dependent DNA ligase family. LigA subfamily. It depends on Mg(2+) as a cofactor. Mn(2+) is required as a cofactor.

It carries out the reaction NAD(+) + (deoxyribonucleotide)n-3'-hydroxyl + 5'-phospho-(deoxyribonucleotide)m = (deoxyribonucleotide)n+m + AMP + beta-nicotinamide D-nucleotide.. Its function is as follows. DNA ligase that catalyzes the formation of phosphodiester linkages between 5'-phosphoryl and 3'-hydroxyl groups in double-stranded DNA using NAD as a coenzyme and as the energy source for the reaction. It is essential for DNA replication and repair of damaged DNA. This chain is DNA ligase, found in Staphylococcus epidermidis (strain ATCC 12228 / FDA PCI 1200).